We begin with the raw amino-acid sequence, 223 residues long: GTP cyclohydrolase 1 (223 aa).

Positions 114, 117, and 185 each coordinate Zn(2+).

This sequence belongs to the GTP cyclohydrolase I family. As to quaternary structure, homomer.

The enzyme catalyses GTP + H2O = 7,8-dihydroneopterin 3'-triphosphate + formate + H(+). It participates in cofactor biosynthesis; 7,8-dihydroneopterin triphosphate biosynthesis; 7,8-dihydroneopterin triphosphate from GTP: step 1/1. The sequence is that of GTP cyclohydrolase 1 from Chlorobium chlorochromatii (strain CaD3).